A 124-amino-acid polypeptide reads, in one-letter code: U12-barytoxin-Tl1a (124 aa).

The signal sequence occupies residues 1-20 (MKTMIAWLVLLTFAAALCFA). The propeptide occupies 21 to 78 (DEGLKQEHMNERKKSRFREDIPDEISEDLLLQEMEAMEAELLEKEMRMEENRNSREKR). 3 cysteine pairs are disulfide-bonded: C79–C99, C86–C104, and C98–C118.

This sequence belongs to the neurotoxin 14 (magi-1) family. 04 (ICK-6) subfamily. As to expression, expressed by the venom gland.

It is found in the secreted. Functionally, ion channel inhibitor. This is U12-barytoxin-Tl1a from Trittame loki (Brush-footed trapdoor spider).